Consider the following 132-residue polypeptide: Hemoglobin heart muscle subunit alpha-type (132 aa).

Residues 1-132 (GLSDSEKSAV…GEVGAILTSS (132 aa)) form the Globin domain. Positions 58 and 83 each coordinate heme b.

It belongs to the globin family. Monomer.

Its function is as follows. This hemoglobin may replace myocardial myoglobin in this amphibian species. The polypeptide is Hemoglobin heart muscle subunit alpha-type (Aquarana catesbeiana (American bullfrog)).